Consider the following 90-residue polypeptide: Small ribosomal subunit protein uS15 (90 aa).

Belongs to the universal ribosomal protein uS15 family. As to quaternary structure, part of the 30S ribosomal subunit. Forms a bridge to the 50S subunit in the 70S ribosome, contacting the 23S rRNA.

Functionally, one of the primary rRNA binding proteins, it binds directly to 16S rRNA where it helps nucleate assembly of the platform of the 30S subunit by binding and bridging several RNA helices of the 16S rRNA. Forms an intersubunit bridge (bridge B4) with the 23S rRNA of the 50S subunit in the ribosome. This chain is Small ribosomal subunit protein uS15, found in Thermotoga maritima (strain ATCC 43589 / DSM 3109 / JCM 10099 / NBRC 100826 / MSB8).